We begin with the raw amino-acid sequence, 67 residues long: Large ribosomal subunit protein uL29 (67 aa).

Belongs to the universal ribosomal protein uL29 family.

The chain is Large ribosomal subunit protein uL29 from Wolbachia pipientis subsp. Culex pipiens (strain wPip).